Reading from the N-terminus, the 237-residue chain is 2,3,4,5-tetrahydropyridine-2,6-dicarboxylate N-acetyltransferase (237 aa).

This sequence belongs to the transferase hexapeptide repeat family. DapH subfamily.

The catalysed reaction is (S)-2,3,4,5-tetrahydrodipicolinate + acetyl-CoA + H2O = L-2-acetamido-6-oxoheptanedioate + CoA. Its pathway is amino-acid biosynthesis; L-lysine biosynthesis via DAP pathway; LL-2,6-diaminopimelate from (S)-tetrahydrodipicolinate (acetylase route): step 1/3. Catalyzes the transfer of an acetyl group from acetyl-CoA to tetrahydrodipicolinate. This is 2,3,4,5-tetrahydropyridine-2,6-dicarboxylate N-acetyltransferase from Alkaliphilus metalliredigens (strain QYMF).